A 521-amino-acid chain; its full sequence is GMP synthase [glutamine-hydrolyzing] (521 aa).

In terms of domain architecture, Glutamine amidotransferase type-1 spans 9 to 203 (KILILDFGSQ…VSDICQCKKN (195 aa)). The active-site Nucleophile is the Cys86. Active-site residues include His177 and Glu179. Positions 204-396 (WTTDNIITKL…LGLPTHMLNC (193 aa)) constitute a GMPS ATP-PPase domain. Residue 231-237 (SGGVDSS) coordinates ATP.

Homodimer.

It catalyses the reaction XMP + L-glutamine + ATP + H2O = GMP + L-glutamate + AMP + diphosphate + 2 H(+). It functions in the pathway purine metabolism; GMP biosynthesis; GMP from XMP (L-Gln route): step 1/1. In terms of biological role, catalyzes the synthesis of GMP from XMP. The protein is GMP synthase [glutamine-hydrolyzing] of Vesicomyosocius okutanii subsp. Calyptogena okutanii (strain HA).